Reading from the N-terminus, the 316-residue chain is Protease HtpX homolog (316 aa).

A helical transmembrane segment spans residues 16-36 (LFMGAGFLIGGATGMMIALVF). A Zn(2+)-binding site is contributed by histidine 134. Residue glutamate 135 is part of the active site. Histidine 138 is a binding site for Zn(2+). 2 helical membrane-spanning segments follow: residues 149 to 169 (VTAT…FFGG) and 180 to 200 (LGGM…AMLV). Residue glutamate 209 participates in Zn(2+) binding. A disordered region spans residues 295–316 (PVMAATTSSSVPLSGERGGPWS).

It belongs to the peptidase M48B family. Requires Zn(2+) as cofactor.

The protein localises to the cell inner membrane. The polypeptide is Protease HtpX homolog (Caulobacter vibrioides (strain ATCC 19089 / CIP 103742 / CB 15) (Caulobacter crescentus)).